A 170-amino-acid chain; its full sequence is 3-hydroxydecanoyl-[acyl-carrier-protein] dehydratase (170 aa).

Residue His-69 is part of the active site.

This sequence belongs to the thioester dehydratase family. FabA subfamily. Homodimer.

It is found in the cytoplasm. The enzyme catalyses a (3R)-hydroxyacyl-[ACP] = a (2E)-enoyl-[ACP] + H2O. The catalysed reaction is (3R)-hydroxydecanoyl-[ACP] = (2E)-decenoyl-[ACP] + H2O. It carries out the reaction (2E)-decenoyl-[ACP] = (3Z)-decenoyl-[ACP]. It participates in lipid metabolism; fatty acid biosynthesis. Functionally, necessary for the introduction of cis unsaturation into fatty acids. Catalyzes the dehydration of (3R)-3-hydroxydecanoyl-ACP to E-(2)-decenoyl-ACP and then its isomerization to Z-(3)-decenoyl-ACP. Can catalyze the dehydratase reaction for beta-hydroxyacyl-ACPs with saturated chain lengths up to 16:0, being most active on intermediate chain length. This is 3-hydroxydecanoyl-[acyl-carrier-protein] dehydratase from Idiomarina loihiensis (strain ATCC BAA-735 / DSM 15497 / L2-TR).